A 468-amino-acid chain; its full sequence is Beta-monoglucosyldiacylglycerol synthase (468 aa).

The next 4 helical transmembrane spans lie at 51–71, 72–92, 361–381, and 387–407; these read AALV…VSWG, SIFI…VVFA, FMLT…MAVV, and MLGP…FAGL.

This sequence belongs to the glycosyltransferase 2 family. Mg(2+) is required as a cofactor.

Its subcellular location is the membrane. It carries out the reaction a 1,2-diacyl-sn-glycerol + UDP-alpha-D-glucose = a 1,2-diacyl-3-O-(beta-D-glucopyranosyl)-sn-glycerol + UDP + H(+). Its function is as follows. Glucosyltransferase involved in the biosynthesis of the non-bilayer-forming membrane lipid beta-monoglucosyldiacylglycerol which contributes to regulate the properties and stability of the membrane. Catalyzes the transfer of a glucosyl residue from UDP-Glc to diacylglycerol (DAG) acceptor to form the corresponding beta-glucosyl-DAG (1,2-diacyl-3-O-(beta-D-glucopyranosyl)-sn-glycerol). It can only use UDP-Glc as sugar donor. This Trichormus variabilis (strain ATCC 29413 / PCC 7937) (Anabaena variabilis) protein is Beta-monoglucosyldiacylglycerol synthase.